We begin with the raw amino-acid sequence, 73 residues long: Serine rich endogenous peptide 14 (73 aa).

Positions 1 to 31 (MAAKTSNLVALLLSLFLLLLSISSQVGLGEA) are cleaved as a signal peptide. The disordered stretch occupies residues 44-73 (VSHPSPPPPHRSMAPPIFVPPSTSHKGQGP). Positions 59 to 73 (PIFVPPSTSHKGQGP) match the SCOOP motif motif. Over residues 64 to 73 (PSTSHKGQGP) the composition is skewed to polar residues. Residues 65–67 (STS) carry the SxS motif essential for MIK2 binding motif.

Belongs to the serine rich endogenous peptide (SCOOP) phytocytokine family. In terms of assembly, interacts with MIK2 (via extracellular leucine-rich repeat domain); this interaction triggers the formation of complex between MIK2 and the BAK1/SERK3 and SERK4 coreceptors, and subsequent BAK1 activation by phosphorylation. In terms of tissue distribution, mostly expressed in seedlings shoots and leaves, and, to a lower extent, in roots, stems, siliques, seeds and flowers.

The protein resides in the cell membrane. It localises to the secreted. The protein localises to the extracellular space. Its subcellular location is the apoplast. In terms of biological role, brassicaceae-specific phytocytokine (plant endogenous peptide released into the apoplast) perceived by MIK2 in a BAK1/SERK3 and SERK4 coreceptors-dependent manner, that modulates various physiological and antimicrobial processes including growth prevention and reactive oxygen species (ROS) response regulation. Inhibits root growth and regulates root meristems. Prevents general growth and development. Exhibits antibacterial effects against Pseudomonas syringae pv. tomato DC3000, Ralstonia solanacearum, Bacillus subtilis and Agrobacterium tumefaciens, thus being an antimicrobial peptide (AMP). This is Serine rich endogenous peptide 14 from Arabidopsis thaliana (Mouse-ear cress).